The following is a 290-amino-acid chain: Diaminopimelate epimerase (290 aa).

Asn17, Gln49, and Asn69 together coordinate substrate. The active-site Proton donor is Cys78. Substrate-binding positions include 79-80 (GN), Asn166, Asn199, and 217-218 (ER). Residue Cys226 is the Proton acceptor of the active site. Substrate is bound at residue 227–228 (GS).

This sequence belongs to the diaminopimelate epimerase family. Homodimer.

It localises to the cytoplasm. The catalysed reaction is (2S,6S)-2,6-diaminopimelate = meso-2,6-diaminopimelate. The protein operates within amino-acid biosynthesis; L-lysine biosynthesis via DAP pathway; DL-2,6-diaminopimelate from LL-2,6-diaminopimelate: step 1/1. Its function is as follows. Catalyzes the stereoinversion of LL-2,6-diaminopimelate (L,L-DAP) to meso-diaminopimelate (meso-DAP), a precursor of L-lysine and an essential component of the bacterial peptidoglycan. In Afipia carboxidovorans (strain ATCC 49405 / DSM 1227 / KCTC 32145 / OM5) (Oligotropha carboxidovorans), this protein is Diaminopimelate epimerase.